We begin with the raw amino-acid sequence, 151 residues long: Guanylate kinase homolog (151 aa).

The Guanylate kinase-like domain occupies 1-141; the sequence is MEREGVDYHY…AYSKLIQILQ (141 aa).

This sequence belongs to the guanylate kinase family.

This is Guanylate kinase homolog from Vaccinia virus (strain Copenhagen) (VACV).